The primary structure comprises 300 residues: Estradiol 17-beta-dehydrogenase 11 (300 aa).

Positions 1 to 19 (MKFLLDVLLLLPLLIVCSL) are cleaved as a signal peptide. 40 to 64 (LITGAGHGIGRLTAYEFAKLKSKLV) serves as a coordination point for NADP(+). Ser172 is a binding site for substrate. The active-site Proton acceptor is the Tyr185.

Belongs to the short-chain dehydrogenases/reductases (SDR) family. 17-beta-HSD 3 subfamily.

Its subcellular location is the endoplasmic reticulum. The protein resides in the lipid droplet. The enzyme catalyses 17beta-estradiol + NAD(+) = estrone + NADH + H(+). It catalyses the reaction 17beta-estradiol + NADP(+) = estrone + NADPH + H(+). Can convert androstan-3-alpha,17-beta-diol (3-alpha-diol) to androsterone in vitro, suggesting that it may participate in androgen metabolism during steroidogenesis. May act by metabolizing compounds that stimulate steroid synthesis and/or by generating metabolites that inhibit it. Has no activity toward DHEA (dehydroepiandrosterone), or A-dione (4-androste-3,17-dione), and only a slight activity toward testosterone to A-dione. This is Estradiol 17-beta-dehydrogenase 11 (HSD17B11) from Pongo abelii (Sumatran orangutan).